Reading from the N-terminus, the 125-residue chain is uncharacterized protein (125 aa).

This is an uncharacterized protein from Escherichia coli (Bacteriophage T4).